The primary structure comprises 102 residues: Lipopolysaccharide assembly protein A (102 aa).

Over 1–2 (MK) the chain is Cytoplasmic. A helical transmembrane segment spans residues 3 to 23 (YLLIFLLVLAIFVISVTLGAQ). Residues 24–43 (NDQQVTFNYLLAQGEYRIST) are Periplasmic-facing. The helical transmembrane segment at 44 to 64 (LLAVLFAAGFAIGWLICGLFW) threads the bilayer. Positions 64–92 (WLRVRVSLARAERKIKRLENQLSPATDVA) form a coiled coil. Residues 65–102 (LRVRVSLARAERKIKRLENQLSPATDVAVVPHSSAAKE) lie on the Cytoplasmic side of the membrane.

It belongs to the LapA family.

It is found in the cell inner membrane. Involved in the assembly of lipopolysaccharide (LPS). The protein is Lipopolysaccharide assembly protein A of Escherichia coli (strain K12).